The following is a 240-amino-acid chain: Acetoacetyl-CoA reductase (240 aa).

Residues 18-20 (RGI) and 82-86 (NAGIT) each bind NADP(+). Substrate-binding positions include Ser-134 and 141 to 144 (NVGQ). Residue Tyr-147 is the Proton acceptor of the active site. Position 177–180 (177–180 (PGFI)) interacts with NADP(+). 178-179 (GF) contributes to the substrate binding site.

It belongs to the short-chain dehydrogenases/reductases (SDR) family.

The enzyme catalyses a (3R)-3-hydroxyacyl-CoA + NADP(+) = a 3-oxoacyl-CoA + NADPH + H(+). The protein operates within biopolymer metabolism; poly-(R)-3-hydroxybutanoate biosynthesis. Functionally, catalyzes the reduction of acetoacetyl-CoA to (R)-3-hydroxybutyryl-CoA. When expressed in E.coli with Synechocystis PhaA, PhaC and PhaE confers the ability to synthesize up to 12% (w/w) poly(3-hydroxybutyrate) (PHB) depending on the carbon source. This chain is Acetoacetyl-CoA reductase, found in Synechocystis sp. (strain ATCC 27184 / PCC 6803 / Kazusa).